The primary structure comprises 192 residues: Peptidyl-tRNA hydrolase (192 aa).

A tRNA-binding site is contributed by Y14. The active-site Proton acceptor is the H19. Y64, N66, and N112 together coordinate tRNA.

It belongs to the PTH family. As to quaternary structure, monomer.

The protein localises to the cytoplasm. The enzyme catalyses an N-acyl-L-alpha-aminoacyl-tRNA + H2O = an N-acyl-L-amino acid + a tRNA + H(+). Hydrolyzes ribosome-free peptidyl-tRNAs (with 1 or more amino acids incorporated), which drop off the ribosome during protein synthesis, or as a result of ribosome stalling. Its function is as follows. Catalyzes the release of premature peptidyl moieties from peptidyl-tRNA molecules trapped in stalled 50S ribosomal subunits, and thus maintains levels of free tRNAs and 50S ribosomes. This Anaeromyxobacter dehalogenans (strain 2CP-C) protein is Peptidyl-tRNA hydrolase.